A 194-amino-acid chain; its full sequence is 22 kDa relaxation protein (194 aa).

Its function is as follows. This protein is probably required for relaxation complex formation. This chain is 22 kDa relaxation protein, found in Salmonella typhimurium.